The sequence spans 454 residues: Prenyltransferase nscD (454 aa).

This sequence belongs to the tryptophan dimethylallyltransferase family.

It participates in secondary metabolite biosynthesis. Functionally, prenyltransferase; part of the gene cluster that mediates the biosynthesis of neosartoricin, a prenylated anthracenone that exhibits T-cell antiproliferative activity, suggestive of a physiological role as an immunosuppressive agent. The non-reducing polyketide synthase nscA probably synthesizes and cyclizes the decaketide backbone. The hydrolase nscB then mediates the product release through hydrolysis followed by spontaneous decarboxylation. The prenyltransferase nscD catalyzes the addition of the dimethylallyl group to the aromatic C5. The FAD-dependent monooxygenase nscC is then responsible for the stereospecific hydroxylation at C2. There is no gene encoding O-acetyltransferase in the nsc gene cluster; thus, the last step of 2-O-acetylation leading to neosartoricin may be catalyzed by an unidentified O-acetyltransferase. The sequence is that of Prenyltransferase nscD from Neosartorya fischeri (strain ATCC 1020 / DSM 3700 / CBS 544.65 / FGSC A1164 / JCM 1740 / NRRL 181 / WB 181) (Aspergillus fischerianus).